A 129-amino-acid chain; its full sequence is Arsenate-mycothiol transferase ArsC2 (129 aa).

It belongs to the low molecular weight phosphotyrosine protein phosphatase family.

The protein resides in the cytoplasm. It carries out the reaction mycothiol + arsenate = arseno-mycothiol + H2O. In terms of biological role, involved in defense against toxic arsenate. Involved in the mycothiol/myoredoxin redox pathway which uses a mycothioltransferase mechanism; facilitates adduct formation between arsenate and mycothiol. In Corynebacterium glutamicum (strain ATCC 13032 / K051), this protein is Arsenate-mycothiol transferase ArsC2 (arsC2).